Consider the following 122-residue polypeptide: Small ribosomal subunit protein uS13 (122 aa).

The interval 97-122 is disordered; it reads PVRGQRTHTNARTRKGPAKAIAGKKK.

It belongs to the universal ribosomal protein uS13 family. In terms of assembly, part of the 30S ribosomal subunit. Forms a loose heterodimer with protein S19. Forms two bridges to the 50S subunit in the 70S ribosome.

Located at the top of the head of the 30S subunit, it contacts several helices of the 16S rRNA. In the 70S ribosome it contacts the 23S rRNA (bridge B1a) and protein L5 of the 50S subunit (bridge B1b), connecting the 2 subunits; these bridges are implicated in subunit movement. Contacts the tRNAs in the A and P-sites. The polypeptide is Small ribosomal subunit protein uS13 (Bartonella quintana (strain Toulouse) (Rochalimaea quintana)).